We begin with the raw amino-acid sequence, 339 residues long: NADH-quinone oxidoreductase subunit H (339 aa).

9 consecutive transmembrane segments (helical) span residues 9–29 (IFPL…LILC), 50–70 (PNVV…KLLF), 82–102 (ILFI…WAVI), 115–135 (VGVL…IIAG), 161–181 (MGLV…SEII), 187–207 (MPWW…ISVL), 235–255 (MGFA…SAMT), 275–295 (IPGF…FLWI), and 311–331 (GWKV…SVLV).

It belongs to the complex I subunit 1 family. In terms of assembly, NDH-1 is composed of 14 different subunits. Subunits NuoA, H, J, K, L, M, N constitute the membrane sector of the complex.

It localises to the cell membrane. The catalysed reaction is a quinone + NADH + 5 H(+)(in) = a quinol + NAD(+) + 4 H(+)(out). Its function is as follows. NDH-1 shuttles electrons from NADH, via FMN and iron-sulfur (Fe-S) centers, to quinones in the respiratory chain. The immediate electron acceptor for the enzyme in this species is believed to be ubiquinone. Couples the redox reaction to proton translocation (for every two electrons transferred, four hydrogen ions are translocated across the cytoplasmic membrane), and thus conserves the redox energy in a proton gradient. This subunit may bind ubiquinone. This Rickettsia africae (strain ESF-5) protein is NADH-quinone oxidoreductase subunit H.